The following is a 1185-amino-acid chain: Calmodulin-binding transcription activator homolog 1 (1185 aa).

A DNA-binding region (CG-1) is located at residues Ala72–Ile200. Disordered stretches follow at residues Gly252–Ser277 and Lys390–Thr411. Positions Ser393 to Thr411 are enriched in low complexity. The IPT/TIG domain occupies Glu418 to Glu498. The ANK repeat unit spans residues Asp616 to Val646. The IQ domain maps to Glu957 to Arg984. Residues Cys1121 to Ala1185 are disordered. The segment covering Gln1128–Pro1147 has biased composition (basic and acidic residues).

Belongs to the CAMTA family. May interact with calmodulin. Expressed broadly in the nervous system.

The protein resides in the nucleus. Its function is as follows. Transcription factor. Positively modulates neuronal levels of the ubiquitous Ca2+ sensor calmodulin/cmd-1, probably by direct binding to the cmd-1 promoter, thereby regulating Ca2+ signaling, physiology, and behavior. The polypeptide is Calmodulin-binding transcription activator homolog 1 (Caenorhabditis elegans).